Consider the following 542-residue polypeptide: Protein lin-9 homolog (542 aa).

A2 is subject to N-acetylalanine. The interval 2–296 (AELDQLPDES…QKQRPSRFFM (295 aa)) is sufficient for interaction with RB1. K21 participates in a covalent cross-link: Glycyl lysine isopeptide (Lys-Gly) (interchain with G-Cter in SUMO2). Residues S65 and S95 each carry the phosphoserine modification. Phosphothreonine occurs at positions 96 and 304. A phosphoserine mark is found at S309 and S321. Residues 354-413 (MIKKEHIKKLREMNTEAEKLKSYSMPISIEFQRRYATIVLELEQLNKDLNKVLHKVQQYC) adopt a coiled-coil conformation.

It belongs to the lin-9 family. As to quaternary structure, component of the DREAM complex (also named LINC complex) at least composed of E2F4, E2F5, LIN9, LIN37, LIN52, LIN54, MYBL1, MYBL2, RBL1, RBL2, RBBP4, TFDP1 and TFDP2. The complex exists in quiescent cells where it represses cell cycle-dependent genes. It dissociates in S phase when LIN9, LIN37, LIN52 and LIN54 form a subcomplex that binds to MYBL2. Interacts with RB1. As to expression, expressed in thymus and testis.

The protein resides in the nucleus. The protein localises to the nucleoplasm. In terms of biological role, acts as a tumor suppressor. Inhibits DNA synthesis. Its ability to inhibit oncogenic transformation is mediated through its association with RB1. Plays a role in the expression of genes required for the G1/S transition. This Homo sapiens (Human) protein is Protein lin-9 homolog (LIN9).